Reading from the N-terminus, the 316-residue chain is HPr kinase/phosphorylase (316 aa).

Catalysis depends on residues His143 and Lys164. Residue 158 to 165 (GEAGSGKS) participates in ATP binding. Ser165 is a binding site for Mg(2+). The active-site Proton acceptor; for phosphorylation activity. Proton donor; for dephosphorylation activity is Asp182. The interval 206-215 (LEVRGLGVLN) is important for the catalytic mechanism of both phosphorylation and dephosphorylation. Glu207 provides a ligand contact to Mg(2+). Arg251 is an active-site residue. An important for the catalytic mechanism of dephosphorylation region spans residues 272–277 (PVMPGR).

This sequence belongs to the HPrK/P family. In terms of assembly, homohexamer. Mg(2+) is required as a cofactor.

The catalysed reaction is [HPr protein]-L-serine + ATP = [HPr protein]-O-phospho-L-serine + ADP + H(+). It carries out the reaction [HPr protein]-O-phospho-L-serine + phosphate + H(+) = [HPr protein]-L-serine + diphosphate. In terms of biological role, catalyzes the ATP- as well as the pyrophosphate-dependent phosphorylation of a specific serine residue in HPr, a phosphocarrier protein of the phosphoenolpyruvate-dependent sugar phosphotransferase system (PTS). HprK/P also catalyzes the pyrophosphate-producing, inorganic phosphate-dependent dephosphorylation (phosphorolysis) of seryl-phosphorylated HPr (P-Ser-HPr). This chain is HPr kinase/phosphorylase, found in Xanthomonas oryzae pv. oryzae (strain MAFF 311018).